We begin with the raw amino-acid sequence, 400 residues long: Acetate kinase (400 aa).

Asparagine 10 lines the Mg(2+) pocket. ATP is bound at residue lysine 17. Position 91 (arginine 91) interacts with substrate. Residue aspartate 150 is the Proton donor/acceptor of the active site. Residues 210–214, 285–287, and 333–337 each bind ATP; these read HLGNG, DCR, and GIGEN. Glutamate 387 serves as a coordination point for Mg(2+).

Belongs to the acetokinase family. As to quaternary structure, homodimer. Mg(2+) serves as cofactor. It depends on Mn(2+) as a cofactor.

Its subcellular location is the cytoplasm. The enzyme catalyses acetate + ATP = acetyl phosphate + ADP. It functions in the pathway metabolic intermediate biosynthesis; acetyl-CoA biosynthesis; acetyl-CoA from acetate: step 1/2. Its function is as follows. Catalyzes the formation of acetyl phosphate from acetate and ATP. Can also catalyze the reverse reaction. The polypeptide is Acetate kinase (Erwinia tasmaniensis (strain DSM 17950 / CFBP 7177 / CIP 109463 / NCPPB 4357 / Et1/99)).